A 614-amino-acid chain; its full sequence is Dihydroxy-acid dehydratase (614 aa).

Mg(2+) is bound at residue D81. A [2Fe-2S] cluster-binding site is contributed by C122. Mg(2+) is bound by residues D123 and K124. K124 bears the N6-carboxylysine mark. [2Fe-2S] cluster is bound at residue C195. E491 lines the Mg(2+) pocket. S517 functions as the Proton acceptor in the catalytic mechanism.

It belongs to the IlvD/Edd family. Homodimer. [2Fe-2S] cluster is required as a cofactor. Requires Mg(2+) as cofactor.

The enzyme catalyses (2R)-2,3-dihydroxy-3-methylbutanoate = 3-methyl-2-oxobutanoate + H2O. It carries out the reaction (2R,3R)-2,3-dihydroxy-3-methylpentanoate = (S)-3-methyl-2-oxopentanoate + H2O. It participates in amino-acid biosynthesis; L-isoleucine biosynthesis; L-isoleucine from 2-oxobutanoate: step 3/4. Its pathway is amino-acid biosynthesis; L-valine biosynthesis; L-valine from pyruvate: step 3/4. Its function is as follows. Functions in the biosynthesis of branched-chain amino acids. Catalyzes the dehydration of (2R,3R)-2,3-dihydroxy-3-methylpentanoate (2,3-dihydroxy-3-methylvalerate) into 2-oxo-3-methylpentanoate (2-oxo-3-methylvalerate) and of (2R)-2,3-dihydroxy-3-methylbutanoate (2,3-dihydroxyisovalerate) into 2-oxo-3-methylbutanoate (2-oxoisovalerate), the penultimate precursor to L-isoleucine and L-valine, respectively. The chain is Dihydroxy-acid dehydratase from Actinobacillus succinogenes (strain ATCC 55618 / DSM 22257 / CCUG 43843 / 130Z).